The sequence spans 38 residues: Photosystem II reaction center protein L (38 aa).

A helical membrane pass occupies residues 17-37 (SLYWGLLLIFVLAVLFSNYFF).

It belongs to the PsbL family. As to quaternary structure, PSII is composed of 1 copy each of membrane proteins PsbA, PsbB, PsbC, PsbD, PsbE, PsbF, PsbH, PsbI, PsbJ, PsbK, PsbL, PsbM, PsbT, PsbX, PsbY, PsbZ, Psb30/Ycf12, at least 3 peripheral proteins of the oxygen-evolving complex and a large number of cofactors. It forms dimeric complexes.

The protein localises to the plastid. Its subcellular location is the chloroplast thylakoid membrane. Functionally, one of the components of the core complex of photosystem II (PSII). PSII is a light-driven water:plastoquinone oxidoreductase that uses light energy to abstract electrons from H(2)O, generating O(2) and a proton gradient subsequently used for ATP formation. It consists of a core antenna complex that captures photons, and an electron transfer chain that converts photonic excitation into a charge separation. This subunit is found at the monomer-monomer interface and is required for correct PSII assembly and/or dimerization. This Gnetum gnemon (Spanish joint-fir) protein is Photosystem II reaction center protein L.